The chain runs to 384 residues: MSKRKICIVSATRAEWYLLRNLCHEIQNDKDLSLQIIATGAHLSPEFGLTYKEIEKEFKITKKIPILLANDDKISLCKSMSLAFSAFSDAFEDLKPDMVVILGDRYEMLSVASVCLLMHIPLVHLCGGELTLGAIDDSIRHSISKMSHLHFVSHEIYKKRLLQLGEEEKRVFNIGSLASTIIKNMNFLNKKDLEKALEMKLDKELYLITYHPLTLNVKNTQKEIKTLLKKLDTLKNASLIFTKANADENGLLINEILQNYCQKNSHKAKLFDNLGSQKYLSLMKIAKAMIGNSSSGISESPFFKTPCINIGDRQKGRLRTQNIIDSEINDLDQAFEKLESKEFKQNLKNFKNPYDNGKNPNKIIKTCLKNVNLDTILHKNFIDL.

It belongs to the UDP-N-acetylglucosamine 2-epimerase family.

The enzyme catalyses GDP-N,N'-diacetylbacillosamine + H2O = 2,4-diacetamido-2,4,6-trideoxy-alpha-D-mannopyranose + GDP + H(+). It carries out the reaction UDP-N,N'-diacetylbacillosamine + H2O = 2,4-diacetamido-2,4,6-trideoxy-alpha-D-mannopyranose + UDP + H(+). Functionally, involved in biosynthesis of legionaminic acid (5,7-diamino-3,5,7,9-tetradeoxy-D-glycero-D-galacto-non-2-ulosonic acid)(Leg), a sialic acid-like derivative that is incorporated into flagellin via O-linkage to Ser/Thr. Catalyzes the conversion of GDP-N,N'-diacetylbacillosamine (Bac2Ac4Ac) into 2,4-diacetamido-2,4,6-trideoxymannose and GDP. It can also use UDP-N,N'-diacetylbacillosamine however it generates small quantities of 2,4-diacetamido-2,4,6-trideoxymannose. The sequence is that of GDP/UDP-N,N'-diacetylbacillosamine 2-epimerase (hydrolyzing) (legG) from Campylobacter jejuni subsp. jejuni serotype O:2 (strain ATCC 700819 / NCTC 11168).